Reading from the N-terminus, the 178-residue chain is Ribulose bisphosphate carboxylase small subunit, chloroplastic (178 aa).

The N-terminal 54 residues, 1 to 54, are a transit peptide targeting the chloroplast; the sequence is MALISSAAVTTINRAPVQANLATPFTGLKSSAGFPVTKKNNDITSITSNGSRVN.

Belongs to the RuBisCO small chain family. Heterohexadecamer of 8 large and 8 small subunits.

The protein resides in the plastid. It is found in the chloroplast. In terms of biological role, ruBisCO catalyzes two reactions: the carboxylation of D-ribulose 1,5-bisphosphate, the primary event in carbon dioxide fixation, as well as the oxidative fragmentation of the pentose substrate. Both reactions occur simultaneously and in competition at the same active site. Although the small subunit is not catalytic it is essential for maximal activity. The polypeptide is Ribulose bisphosphate carboxylase small subunit, chloroplastic (Trifolium repens (Creeping white clover)).